Here is a 216-residue protein sequence, read N- to C-terminus: Probable nicotinate-nucleotide adenylyltransferase (216 aa).

The protein belongs to the NadD family.

The catalysed reaction is nicotinate beta-D-ribonucleotide + ATP + H(+) = deamido-NAD(+) + diphosphate. Its pathway is cofactor biosynthesis; NAD(+) biosynthesis; deamido-NAD(+) from nicotinate D-ribonucleotide: step 1/1. Functionally, catalyzes the reversible adenylation of nicotinate mononucleotide (NaMN) to nicotinic acid adenine dinucleotide (NaAD). The polypeptide is Probable nicotinate-nucleotide adenylyltransferase (Shewanella pealeana (strain ATCC 700345 / ANG-SQ1)).